The following is a 179-amino-acid chain: Interleukin-22b (179 aa).

A signal peptide spans 1–33; it reads MAVLQKSMSFSLMGTLAASCLLLIALWAQEANA. Cystine bridges form between C40–C132 and C89–C178. Residues N54, N68, and N97 are each glycosylated (N-linked (GlcNAc...) asparagine).

This sequence belongs to the IL-10 family.

The protein localises to the secreted. In terms of biological role, cytokine that contributes to the inflammatory response in vivo. This Mus musculus (Mouse) protein is Interleukin-22b.